The sequence spans 256 residues: 3-deoxy-manno-octulosonate cytidylyltransferase (256 aa).

This sequence belongs to the KdsB family.

Its subcellular location is the cytoplasm. It carries out the reaction 3-deoxy-alpha-D-manno-oct-2-ulosonate + CTP = CMP-3-deoxy-beta-D-manno-octulosonate + diphosphate. Its pathway is nucleotide-sugar biosynthesis; CMP-3-deoxy-D-manno-octulosonate biosynthesis; CMP-3-deoxy-D-manno-octulosonate from 3-deoxy-D-manno-octulosonate and CTP: step 1/1. It functions in the pathway bacterial outer membrane biogenesis; lipopolysaccharide biosynthesis. Functionally, activates KDO (a required 8-carbon sugar) for incorporation into bacterial lipopolysaccharide in Gram-negative bacteria. The polypeptide is 3-deoxy-manno-octulosonate cytidylyltransferase (Histophilus somni (strain 2336) (Haemophilus somnus)).